Here is a 227-residue protein sequence, read N- to C-terminus: Ribonuclease 3 (227 aa).

The RNase III domain occupies 5–127 (LNALQLRLQH…LIGAVYLDAG (123 aa)). E40 lines the Mg(2+) pocket. D44 is a catalytic residue. Mg(2+)-binding residues include D113 and E116. Residue E116 is part of the active site. The region spanning 154 to 224 (DAKTALQEWL…ATAMLELLKA (71 aa)) is the DRBM domain.

The protein belongs to the ribonuclease III family. Homodimer. Mg(2+) serves as cofactor.

It is found in the cytoplasm. The catalysed reaction is Endonucleolytic cleavage to 5'-phosphomonoester.. Functionally, digests double-stranded RNA. Involved in the processing of primary rRNA transcript to yield the immediate precursors to the large and small rRNAs (23S and 16S). Processes some mRNAs, and tRNAs when they are encoded in the rRNA operon. Processes pre-crRNA and tracrRNA of type II CRISPR loci if present in the organism. In Delftia acidovorans (strain DSM 14801 / SPH-1), this protein is Ribonuclease 3.